A 135-amino-acid chain; its full sequence is Protein NrdI (135 aa).

This sequence belongs to the NrdI family.

In terms of biological role, probably involved in ribonucleotide reductase function. The chain is Protein NrdI from Salmonella gallinarum (strain 287/91 / NCTC 13346).